The primary structure comprises 344 residues: Phenylalanine--tRNA ligase alpha subunit (344 aa).

Residue glutamate 257 coordinates Mg(2+).

It belongs to the class-II aminoacyl-tRNA synthetase family. Phe-tRNA synthetase alpha subunit type 1 subfamily. As to quaternary structure, tetramer of two alpha and two beta subunits. Mg(2+) serves as cofactor.

The protein localises to the cytoplasm. The enzyme catalyses tRNA(Phe) + L-phenylalanine + ATP = L-phenylalanyl-tRNA(Phe) + AMP + diphosphate + H(+). The polypeptide is Phenylalanine--tRNA ligase alpha subunit (Chlorobium chlorochromatii (strain CaD3)).